The chain runs to 368 residues: Proline-rich protein 5-like (368 aa).

Phosphoserine is present on serine 28. The segment at 327 to 368 is disordered; the sequence is PSFPPPHRQCSSEPNITDNPDGLEEGARGSQEGSELNCASLS. Composition is skewed to polar residues over residues 335-344 and 357-368; these read QCSSEPNITD and QEGSELNCASLS.

The protein belongs to the PROTOR family. As to quaternary structure, interacts with the mammalian target of rapamycin complex 2 (mTORC2) which contains MTOR, MLST8, PRR5, RICTOR, MAPKAP1 and DEPTOR. Interacts with RFFL. Interacts (via C-terminus) with ZFP36 (via C-terminus); this interaction may accelerate ZFP36-mediated mRNA decay during stress. Interacts with RICTOR. Ubiquitinated. Ubiquitination by RFFL promotes proteasomal degradation of PRR5L thereby modifying the substrate-specific activity of the mTORC2 complex. Ubiquitination by RFFL is stimulated by LPA/lysophosphatidic acid.

In terms of biological role, associates with the mTORC2 complex that regulates cellular processes including survival and organization of the cytoskeleton. Regulates the activity of the mTORC2 complex in a substrate-specific manner preventing for instance the specific phosphorylation of PKCs and thereby controlling cell migration. Plays a role in the stimulation of ZFP36-mediated mRNA decay of several ZFP36-associated mRNAs, such as TNF-alpha and GM-CSF, in response to stress. Required for ZFP36 localization to cytoplasmic stress granule (SG) and P-body (PB) in response to stress. The sequence is that of Proline-rich protein 5-like (PRR5L) from Homo sapiens (Human).